A 352-amino-acid polypeptide reads, in one-letter code: C-C chemokine receptor type 5 (352 aa).

The Extracellular portion of the chain corresponds to 1-30 (MDYQVSSPTYDIDYYTSGPCQKINVKQIAA). At Tyr-3 the chain carries Sulfotyrosine. Ser-6 and Ser-7 each carry an O-linked (GalNAc...) serine glycan. 3 positions are modified to sulfotyrosine: Tyr-10, Tyr-14, and Tyr-15. Intrachain disulfides connect Cys-20–Cys-269 and Cys-101–Cys-178. The helical transmembrane segment at 31-58 (RLLPPLYSLVFIFGFVGNMLVILILINC) threads the bilayer. The Cytoplasmic portion of the chain corresponds to 59 to 68 (KRLKSMTDIY). The chain crosses the membrane as a helical span at residues 69 to 89 (LLNLAISDLFFLLTVPFWAHY). Residues 90-102 (AAAQWDFGNTMCQ) are Extracellular-facing. The helical transmembrane segment at 103 to 124 (LLTGLYFIGFFSGIFFIILLTI) threads the bilayer. Topologically, residues 125 to 141 (DRYLAIVHAVFALKART) are cytoplasmic. Residues 142–166 (VTFGVVTSVITWVVAVFASLPGIIF) traverse the membrane as a helical segment. The Extracellular portion of the chain corresponds to 167–198 (TRSQKEGLHYTCSSHFPYSQYQFWKNFQTLKI). The chain crosses the membrane as a helical span at residues 199-218 (VILGLVLPLLVMVICYSGIL). Topologically, residues 219–235 (KTLLRCRNEKKRHRAVR) are cytoplasmic. The helical transmembrane segment at 236 to 260 (LIFTIMIVYFLFWAPYNIVLLLNTF) threads the bilayer. Over 261 to 277 (QEFFGLNNCSSSNRLDQ) the chain is Extracellular. The helical transmembrane segment at 278–301 (AMQVTETLGMTHCCINPIIYAFVG) threads the bilayer. Residues 302–352 (EKFRNYLLVFFQKHIAKHFCKCCSIFQQEAPERASSVYTRSTGEQEISVGL) lie on the Cytoplasmic side of the membrane. Residues Cys-321, Cys-323, and Cys-324 are each lipidated (S-palmitoyl cysteine). 4 positions are modified to phosphoserine; by BARK1: Ser-336, Ser-337, Ser-342, and Ser-349.

The protein belongs to the G-protein coupled receptor 1 family. In terms of assembly, interacts with PRAF2. Efficient ligand binding to CCL3/MIP-1alpha and CCL4/MIP-1beta requires sulfation, O-glycosylation and sialic acid modifications. Glycosylation on Ser-6 is required for efficient binding of CCL4. Interacts with GRK2. Interacts with ARRB1 and ARRB2. Interacts with CNIH4. Interacts with S100A4; this interaction stimulates T-lymphocyte chemotaxis. Post-translationally, sulfated on at least 2 of the N-terminal tyrosines. Sulfation is required for efficient binding of the chemokines, CCL3 and CCL4. Palmitoylation in the C-terminal is important for cell surface expression. In terms of processing, phosphorylation on serine residues in the C-terminal is stimulated by binding CC chemokines especially by APO-RANTES. Post-translationally, O-glycosylated, but not N-glycosylated. Ser-6 appears to be the major site even if Ser-7 may be also O-glycosylated. Also sialylated glycans present which contribute to chemokine binding. Thr-16 and Ser-17 may also be glycosylated and, if so, with small moieties such as a T-antigen.

It localises to the cell membrane. Its function is as follows. Receptor for a number of inflammatory CC-chemokines including CCL3/MIP-1-alpha, CCL4/MIP-1-beta and RANTES and subsequently transduces a signal by increasing the intracellular calcium ion level. May play a role in the control of granulocytic lineage proliferation or differentiation. Participates in T-lymphocyte migration to the infection site by acting as a chemotactic receptor. In Hylobates moloch (Silvery gibbon), this protein is C-C chemokine receptor type 5 (CCR5).